The sequence spans 435 residues: AP-2 complex subunit mu (435 aa).

Residues 170–434 (RNELFLDVLE…IGRSGIYETR (265 aa)) form the MHD domain. Residues lysine 341, lysine 345, and lysine 354 each contribute to the a 1,2-diacyl-sn-glycero-3-phospho-(1D-myo-inositol-3,4,5-trisphosphate) site.

Belongs to the adaptor complexes medium subunit family. Adaptor protein complex 2 (AP-2) is a heterotetramer composed of two large adaptins (alpha-type subunit and beta-type subunit), a medium adaptin (mu-type subunit) and a small adaptin (sigma-type subunit).

The protein resides in the cell membrane. It localises to the membrane. The protein localises to the coated pit. In terms of biological role, component of the adaptor complexes which link clathrin to receptors in coated vesicles. Clathrin-associated protein complexes are believed to interact with the cytoplasmic tails of membrane proteins, leading to their selection and concentration. AP50 is a subunit of the plasma membrane adaptor. The complex binds polyphosphoinositide-containing lipids. This Xenopus tropicalis (Western clawed frog) protein is AP-2 complex subunit mu (ap2m1).